The primary structure comprises 306 residues: Glycine--tRNA ligase alpha subunit (306 aa).

Belongs to the class-II aminoacyl-tRNA synthetase family. In terms of assembly, tetramer of two alpha and two beta subunits.

It localises to the cytoplasm. The enzyme catalyses tRNA(Gly) + glycine + ATP = glycyl-tRNA(Gly) + AMP + diphosphate. In Aliivibrio fischeri (strain ATCC 700601 / ES114) (Vibrio fischeri), this protein is Glycine--tRNA ligase alpha subunit.